Consider the following 167-residue polypeptide: Lipoprotein signal peptidase (167 aa).

Transmembrane regions (helical) follow at residues 8-28 (FFLL…YWIM), 61-81 (FSHW…LWLW), and 93-113 (FGLT…ICFY). Catalysis depends on residues D117 and D136. A helical membrane pass occupies residues 126-146 (IFYFAVFNLADTFITLGVIAI).

It belongs to the peptidase A8 family.

It localises to the cell inner membrane. It catalyses the reaction Release of signal peptides from bacterial membrane prolipoproteins. Hydrolyzes -Xaa-Yaa-Zaa-|-(S,diacylglyceryl)Cys-, in which Xaa is hydrophobic (preferably Leu), and Yaa (Ala or Ser) and Zaa (Gly or Ala) have small, neutral side chains.. Its pathway is protein modification; lipoprotein biosynthesis (signal peptide cleavage). Functionally, this protein specifically catalyzes the removal of signal peptides from prolipoproteins. The protein is Lipoprotein signal peptidase of Bartonella quintana (strain Toulouse) (Rochalimaea quintana).